The primary structure comprises 143 residues: Large ribosomal subunit protein uL15 (143 aa).

The disordered stretch occupies residues 1 to 59 (MELNGIKPSLGAKHAKRRVGRGIGSGLGKTAGRGHKGQKSRAGGYHKVGFEGGQMPMQR). Positions 21–31 (RGIGSGLGKTA) are enriched in gly residues.

It belongs to the universal ribosomal protein uL15 family. Part of the 50S ribosomal subunit.

Its function is as follows. Binds to the 23S rRNA. In Polaromonas sp. (strain JS666 / ATCC BAA-500), this protein is Large ribosomal subunit protein uL15.